A 165-amino-acid polypeptide reads, in one-letter code: NADPH-dependent 7-cyano-7-deazaguanine reductase (165 aa).

Cysteine 56 functions as the Thioimide intermediate in the catalytic mechanism. Aspartate 63 acts as the Proton donor in catalysis. Residues 78-80 and 97-98 each bind substrate; these read VES and HE.

The protein belongs to the GTP cyclohydrolase I family. QueF type 1 subfamily.

Its subcellular location is the cytoplasm. It carries out the reaction 7-aminomethyl-7-carbaguanine + 2 NADP(+) = 7-cyano-7-deazaguanine + 2 NADPH + 3 H(+). The protein operates within tRNA modification; tRNA-queuosine biosynthesis. In terms of biological role, catalyzes the NADPH-dependent reduction of 7-cyano-7-deazaguanine (preQ0) to 7-aminomethyl-7-deazaguanine (preQ1). The chain is NADPH-dependent 7-cyano-7-deazaguanine reductase from Bacillus mycoides (strain KBAB4) (Bacillus weihenstephanensis).